The primary structure comprises 311 residues: Phosphoribosylaminoimidazole-succinocarboxamide synthase (311 aa).

It belongs to the SAICAR synthetase family.

It carries out the reaction 5-amino-1-(5-phospho-D-ribosyl)imidazole-4-carboxylate + L-aspartate + ATP = (2S)-2-[5-amino-1-(5-phospho-beta-D-ribosyl)imidazole-4-carboxamido]succinate + ADP + phosphate + 2 H(+). Its pathway is purine metabolism; IMP biosynthesis via de novo pathway; 5-amino-1-(5-phospho-D-ribosyl)imidazole-4-carboxamide from 5-amino-1-(5-phospho-D-ribosyl)imidazole-4-carboxylate: step 1/2. In Azoarcus sp. (strain BH72), this protein is Phosphoribosylaminoimidazole-succinocarboxamide synthase.